A 569-amino-acid polypeptide reads, in one-letter code: TBCC domain-containing protein 1 (569 aa).

Positions 304-435 (PRSHRIVVMS…LEDHMARTGL (132 aa)) constitute a C-CAP/cofactor C-like domain.

It belongs to the TBCC family.

Its subcellular location is the cytoplasm. The protein resides in the cytoskeleton. It is found in the microtubule organizing center. The protein localises to the centrosome. It localises to the spindle pole. In terms of biological role, plays a role in the regulation of centrosome and Golgi apparatus positioning, with consequences on cell shape and cell migration. The protein is TBCC domain-containing protein 1 (Tbccd1) of Rattus norvegicus (Rat).